Reading from the N-terminus, the 113-residue chain is Hydrogenase maturation factor HybF (113 aa).

Ni(2+)-binding residues include His-2 and Glu-3. Zn(2+) is bound by residues Cys-73, Cys-76, Cys-89, and Cys-92.

This sequence belongs to the HypA/HybF family. HybF subfamily.

Involved in the maturation of [NiFe] hydrogenases. Required for nickel insertion into the metal center of the hydrogenase. The chain is Hydrogenase maturation factor HybF from Escherichia coli O157:H7.